The sequence spans 409 residues: Peptidase T (409 aa).

Zn(2+) is bound at residue His80. The active site involves Asp82. Asp143 is a Zn(2+) binding site. The Proton acceptor role is filled by Glu177. Glu178, Asp200, and His382 together coordinate Zn(2+).

The protein belongs to the peptidase M20B family. Requires Zn(2+) as cofactor.

The protein localises to the cytoplasm. The catalysed reaction is Release of the N-terminal residue from a tripeptide.. Cleaves the N-terminal amino acid of tripeptides. This Enterococcus faecalis (strain ATCC 700802 / V583) protein is Peptidase T.